The following is a 293-amino-acid chain: ATP synthase gamma chain (293 aa).

Belongs to the ATPase gamma chain family. In terms of assembly, F-type ATPases have 2 components, CF(1) - the catalytic core - and CF(0) - the membrane proton channel. CF(1) has five subunits: alpha(3), beta(3), gamma(1), delta(1), epsilon(1). CF(0) has three main subunits: a, b and c.

Its subcellular location is the cell inner membrane. In terms of biological role, produces ATP from ADP in the presence of a proton gradient across the membrane. The gamma chain is believed to be important in regulating ATPase activity and the flow of protons through the CF(0) complex. This is ATP synthase gamma chain from Beijerinckia indica subsp. indica (strain ATCC 9039 / DSM 1715 / NCIMB 8712).